The chain runs to 364 residues: tRNA 2-selenouridine synthase (364 aa).

The Rhodanese domain maps to 14-137 (LIADTPIIDV…LRQTAIQATI (124 aa)). Cysteine 97 acts as the S-selanylcysteine intermediate in catalysis.

The protein belongs to the SelU family. As to quaternary structure, monomer.

The enzyme catalyses 5-methylaminomethyl-2-thiouridine(34) in tRNA + selenophosphate + (2E)-geranyl diphosphate + H2O + H(+) = 5-methylaminomethyl-2-selenouridine(34) in tRNA + (2E)-thiogeraniol + phosphate + diphosphate. The catalysed reaction is 5-methylaminomethyl-2-thiouridine(34) in tRNA + (2E)-geranyl diphosphate = 5-methylaminomethyl-S-(2E)-geranyl-thiouridine(34) in tRNA + diphosphate. It catalyses the reaction 5-methylaminomethyl-S-(2E)-geranyl-thiouridine(34) in tRNA + selenophosphate + H(+) = 5-methylaminomethyl-2-(Se-phospho)selenouridine(34) in tRNA + (2E)-thiogeraniol. It carries out the reaction 5-methylaminomethyl-2-(Se-phospho)selenouridine(34) in tRNA + H2O = 5-methylaminomethyl-2-selenouridine(34) in tRNA + phosphate. In terms of biological role, involved in the post-transcriptional modification of the uridine at the wobble position (U34) of tRNA(Lys), tRNA(Glu) and tRNA(Gln). Catalyzes the conversion of 2-thiouridine (S2U-RNA) to 2-selenouridine (Se2U-RNA). Acts in a two-step process involving geranylation of 2-thiouridine (S2U) to S-geranyl-2-thiouridine (geS2U) and subsequent selenation of the latter derivative to 2-selenouridine (Se2U) in the tRNA chain. This is tRNA 2-selenouridine synthase from Escherichia coli (strain SE11).